The sequence spans 427 residues: Enolase (427 aa).

Residue Gln-163 participates in (2R)-2-phosphoglycerate binding. The Proton donor role is filled by Glu-205. Positions 242, 285, and 312 each coordinate Mg(2+). (2R)-2-phosphoglycerate contacts are provided by Lys-337, Arg-366, Ser-367, and Lys-388. Lys-337 functions as the Proton acceptor in the catalytic mechanism.

Belongs to the enolase family. Mg(2+) is required as a cofactor.

It is found in the cytoplasm. Its subcellular location is the secreted. The protein localises to the cell surface. It carries out the reaction (2R)-2-phosphoglycerate = phosphoenolpyruvate + H2O. It participates in carbohydrate degradation; glycolysis; pyruvate from D-glyceraldehyde 3-phosphate: step 4/5. Catalyzes the reversible conversion of 2-phosphoglycerate (2-PG) into phosphoenolpyruvate (PEP). It is essential for the degradation of carbohydrates via glycolysis. In Thiobacillus denitrificans (strain ATCC 25259 / T1), this protein is Enolase.